We begin with the raw amino-acid sequence, 470 residues long: Probable citrate synthase, mitochondrial (470 aa).

Residues His-297, His-351, and Asp-406 contribute to the active site.

Belongs to the citrate synthase family. As to quaternary structure, homodimer.

The protein localises to the mitochondrion matrix. The enzyme catalyses oxaloacetate + acetyl-CoA + H2O = citrate + CoA + H(+). The protein operates within carbohydrate metabolism; tricarboxylic acid cycle; isocitrate from oxaloacetate: step 1/2. The protein is Probable citrate synthase, mitochondrial of Leishmania braziliensis.